We begin with the raw amino-acid sequence, 453 residues long: 13-hydroxylupanine O-tigloyltransferase (453 aa).

Active-site proton acceptor residues include H166 and D385.

It belongs to the plant acyltransferase family. In terms of assembly, monomer. As to expression, expressed in roots and hypocotyls. Detected in seeds, leaves and cotyledons, but not in young developing leaves.

The catalysed reaction is 13-hydroxylupanine + (2E)-2-methylbut-2-enoyl-CoA = 13-(2-methylcrotonoyloxy)lupanine + CoA. With respect to regulation, inhibited by N-ethylmaleimide, p-chloromercuribenzoic acid and diethylpyrocarbonate (DEPC). In terms of biological role, acyl-CoA-dependent acyltransferase involved in the synthesis of lupanine alkaloids. Can use both (-)-13alpha-hydroxymultiflorine and (+)-13alpha-hydroxylupanine as substrates. Lower activity with (-)-3beta, 13alpha-dihydroxylupanine, but no activity with (+)-epilupinine and (-)-lupinine as substrates. Tigloyl-CoA, benzoyl-CoA and, more slowly, acetyl-CoA, propionyl-CoA and 2-butenoyl-CoA can act as acyl donors. This chain is 13-hydroxylupanine O-tigloyltransferase (HMT/HLT), found in Lupinus albus (White lupine).